The chain runs to 128 residues: Aspartate 1-decarboxylase (128 aa).

Ser25 serves as the catalytic Schiff-base intermediate with substrate; via pyruvic acid. Ser25 carries the post-translational modification Pyruvic acid (Ser). Thr57 is a substrate binding site. The active-site Proton donor is Tyr58. A substrate-binding site is contributed by 73–75 (GAA).

This sequence belongs to the PanD family. Heterooctamer of four alpha and four beta subunits. Pyruvate serves as cofactor. In terms of processing, is synthesized initially as an inactive proenzyme, which is activated by self-cleavage at a specific serine bond to produce a beta-subunit with a hydroxyl group at its C-terminus and an alpha-subunit with a pyruvoyl group at its N-terminus.

The protein resides in the cytoplasm. The enzyme catalyses L-aspartate + H(+) = beta-alanine + CO2. It participates in cofactor biosynthesis; (R)-pantothenate biosynthesis; beta-alanine from L-aspartate: step 1/1. Functionally, catalyzes the pyruvoyl-dependent decarboxylation of aspartate to produce beta-alanine. The protein is Aspartate 1-decarboxylase of Staphylococcus epidermidis (strain ATCC 35984 / DSM 28319 / BCRC 17069 / CCUG 31568 / BM 3577 / RP62A).